A 463-amino-acid chain; its full sequence is Cysteine--tRNA ligase (463 aa).

C29 lines the Zn(2+) pocket. The short motif at 31–41 (PTVYDFAHIGN) is the 'HIGH' region element. C227, H252, and E256 together coordinate Zn(2+). A 'KMSKS' region motif is present at residues 285–289 (KMSKS). K288 provides a ligand contact to ATP.

Belongs to the class-I aminoacyl-tRNA synthetase family. Monomer. Zn(2+) serves as cofactor.

It localises to the cytoplasm. It carries out the reaction tRNA(Cys) + L-cysteine + ATP = L-cysteinyl-tRNA(Cys) + AMP + diphosphate. This is Cysteine--tRNA ligase from Rhodopseudomonas palustris (strain BisB5).